A 349-amino-acid polypeptide reads, in one-letter code: MDIKTALSRIVGHLDLSTEEMRSVMREIMTGQCTDAQIGAFMMAMRMKSESIDEIVGAVSAMRELADRVELKTLDGVVDVVGTGGDGANIFNVSTASSFVVAAAGCTVAKHGNRAVSGKSGSADLLEAAGIYLNLTPVQVARCIDNVGIGFMFAQSHHGAMKYAAGPRRDLGLRTLFNMLGPLTNPAGVKHQVVGVFTQALCRPLAEVLQRLGSKHVLVVHSQDGLDEFSLAAPTYVAELKNDQITEYWVQPEDLGMKSQSLFGLVVESPAASLELIRDALGRRKTEHGQKAAEMIVLNAGAALYAADHASSLKEGVALAHDALHTGLAREKLEELGAFTAVFKQENEG.

Residues Gly-82, 85 to 86 (GD), 92 to 95 (NVST), 110 to 118 (KHGNRAVSG), and Ser-122 each bind 5-phospho-alpha-D-ribose 1-diphosphate. Residue Gly-82 participates in anthranilate binding. Ser-94 is a Mg(2+) binding site. Asn-113 contacts anthranilate. Arg-168 is an anthranilate binding site. The Mg(2+) site is built by Asp-227 and Glu-228.

The protein belongs to the anthranilate phosphoribosyltransferase family. Homodimer. Mg(2+) is required as a cofactor.

It catalyses the reaction N-(5-phospho-beta-D-ribosyl)anthranilate + diphosphate = 5-phospho-alpha-D-ribose 1-diphosphate + anthranilate. Its pathway is amino-acid biosynthesis; L-tryptophan biosynthesis; L-tryptophan from chorismate: step 2/5. Catalyzes the transfer of the phosphoribosyl group of 5-phosphorylribose-1-pyrophosphate (PRPP) to anthranilate to yield N-(5'-phosphoribosyl)-anthranilate (PRA). In Pseudomonas fluorescens (strain ATCC BAA-477 / NRRL B-23932 / Pf-5), this protein is Anthranilate phosphoribosyltransferase.